Here is a 369-residue protein sequence, read N- to C-terminus: Anhydro-N-acetylmuramic acid kinase (369 aa).

Residue Gly12–Asp19 participates in ATP binding.

The protein belongs to the anhydro-N-acetylmuramic acid kinase family.

The enzyme catalyses 1,6-anhydro-N-acetyl-beta-muramate + ATP + H2O = N-acetyl-D-muramate 6-phosphate + ADP + H(+). It participates in amino-sugar metabolism; 1,6-anhydro-N-acetylmuramate degradation. The protein operates within cell wall biogenesis; peptidoglycan recycling. Functionally, catalyzes the specific phosphorylation of 1,6-anhydro-N-acetylmuramic acid (anhMurNAc) with the simultaneous cleavage of the 1,6-anhydro ring, generating MurNAc-6-P. Is required for the utilization of anhMurNAc either imported from the medium or derived from its own cell wall murein, and thus plays a role in cell wall recycling. This is Anhydro-N-acetylmuramic acid kinase from Shewanella sp. (strain MR-4).